The following is a 513-amino-acid chain: Histidine ammonia-lyase (513 aa).

The 5-imidazolinone (Ala-Gly) cross-link spans 144–146; that stretch reads ASG. Ser145 carries the 2,3-didehydroalanine (Ser) modification.

Belongs to the PAL/histidase family. Contains an active site 4-methylidene-imidazol-5-one (MIO), which is formed autocatalytically by cyclization and dehydration of residues Ala-Ser-Gly.

It is found in the cytoplasm. It carries out the reaction L-histidine = trans-urocanate + NH4(+). Its pathway is amino-acid degradation; L-histidine degradation into L-glutamate; N-formimidoyl-L-glutamate from L-histidine: step 1/3. This Streptococcus pyogenes serotype M49 (strain NZ131) protein is Histidine ammonia-lyase.